Here is a 236-residue protein sequence, read N- to C-terminus: Concanavalin-Ma (236 aa).

Mn(2+) is bound by residues Glu8 and Asp10. Ca(2+) is bound by residues Asp10, Tyr12, Asn14, and Asp19. An a carbohydrate-binding site is contributed by Tyr12. Residues Asp19 and His24 each contribute to the Mn(2+) site. 98-99 (LY) serves as a coordination point for a carbohydrate. Asp207 is a Ca(2+) binding site. A carbohydrate is bound at residue Arg227.

Belongs to the leguminous lectin family. Homotetramer.

Glucose/D-mannose specific lectin. This is Concanavalin-Ma from Canavalia rosea (Beach bean).